A 496-amino-acid chain; its full sequence is UDP-N-acetylmuramoylalanine--D-glutamate ligase (496 aa).

130–136 (GTNGKTT) is a binding site for ATP.

Belongs to the MurCDEF family.

It localises to the cytoplasm. It carries out the reaction UDP-N-acetyl-alpha-D-muramoyl-L-alanine + D-glutamate + ATP = UDP-N-acetyl-alpha-D-muramoyl-L-alanyl-D-glutamate + ADP + phosphate + H(+). It participates in cell wall biogenesis; peptidoglycan biosynthesis. Functionally, cell wall formation. Catalyzes the addition of glutamate to the nucleotide precursor UDP-N-acetylmuramoyl-L-alanine (UMA). The polypeptide is UDP-N-acetylmuramoylalanine--D-glutamate ligase (Mycobacterium bovis (strain ATCC BAA-935 / AF2122/97)).